Reading from the N-terminus, the 847-residue chain is B-cell receptor CD22 (847 aa).

The N-terminal stretch at 1 to 19 (MHLLGPWLLLLVLEYLAFS) is a signal peptide. Residues 20 to 138 (DSSKWAFEHP…MERIHLNVSE (119 aa)) enclose the Ig-like V-type domain. Residues 20-687 (DSSKWAFEHP…YYSPETIGRR (668 aa)) lie on the Extracellular side of the membrane. 3 N-linked (GlcNAc...) asparagine glycosylation sites follow: Asn67, Asn101, and Asn112. Arg120 is a binding site for N-acetylneuraminate. 3 N-linked (GlcNAc...) asparagine glycosylation sites follow: Asn135, Asn164, and Asn231. 6 consecutive Ig-like C2-type domains span residues 143 to 235 (PHIQ…DTVQ), 242 to 326 (PKLE…VFLQ), 331 to 416 (PEPS…LDVQ), 419 to 500 (PKKV…VALN), 505 to 582 (PRDV…QTAS), and 593 to 676 (PRRL…STLT). A disulfide bond links Cys161 and Cys219. Cystine bridges form between Cys265-Cys309 and Cys353-Cys396. N-linked (GlcNAc...) asparagine glycosylation is found at Asn363, Asn428, Asn445, Asn448, and Asn479. 2 disulfide bridges follow: Cys442-Cys484 and Cys529-Cys571. N-linked (GlcNAc...) asparagine glycans are attached at residues Asn574 and Asn634. A disulfide bridge connects residues Cys616 and Cys659. The helical transmembrane segment at 688 to 708 (VAVGFGSCLAILILAICGLKL) threads the bilayer. The Cytoplasmic portion of the chain corresponds to 709-847 (QRRWKRTQSQ…ENVDYVILKH (139 aa)). Phosphoserine occurs at positions 725, 726, and 729. 2 short sequence motifs (ITIM motif) span residues 760–765 (ISYTTL) and 794–799 (VTYSVL). Phosphotyrosine is present on Tyr762. A phosphotyrosine mark is found at Tyr807, Tyr822, and Tyr842. Short sequence motifs (ITIM motif) lie at residues 820-825 (IHYSEL) and 840-845 (VDYVIL).

Belongs to the immunoglobulin superfamily. SIGLEC (sialic acid binding Ig-like lectin) family. In terms of assembly, predominantly monomer of isoform CD22-beta. Also found as heterodimer of isoform CD22-beta and a shorter isoform. Interacts with PTPN6/SHP-1, LYN, SYK, PIK3R1/PIK3R2 and PLCG1 upon phosphorylation. Interacts with GRB2, INPP5D and SHC1 upon phosphorylation. May form a complex with INPP5D/SHIP, GRB2 and SHC1. In terms of processing, phosphorylation of Tyr-762, Tyr-807 and Tyr-822 are involved in binding to SYK, GRB2 and SYK, respectively. Phosphorylation of Tyr-842 is involved in binding to SYK, PLCG2 and PIK3R1/PIK3R2. Phosphorylated on tyrosine residues by LYN.

It localises to the cell membrane. In terms of biological role, most highly expressed siglec (sialic acid-binding immunoglobulin-like lectin) on B-cells that plays a role in various aspects of B-cell biology including differentiation, antigen presentation, and trafficking to bone marrow. Binds to alpha 2,6-linked sialic acid residues of surface molecules such as CD22 itself, CD45 and IgM in a cis configuration. Can also bind to ligands on other cells as an adhesion molecule in a trans configuration. Acts as an inhibitory coreceptor on the surface of B-cells and inhibits B-cell receptor induced signaling, characterized by inhibition of the calcium mobilization and cellular activation. Mechanistically, the immunoreceptor tyrosine-based inhibitory motif domain is phosphorylated by the Src kinase LYN, which in turn leads to the recruitment of the protein tyrosine phosphatase 1/PTPN6, leading to the negative regulation of BCR signaling. If this negative signaling from is of sufficient strength, apoptosis of the B-cell can be induced. This Pan paniscus (Pygmy chimpanzee) protein is B-cell receptor CD22.